The following is a 160-amino-acid chain: Succinate dehydrogenase assembly factor 2-A, mitochondrial (160 aa).

The N-terminal 30 residues, 1–30 (MLRQLKLTLNISRWIFMPWQRQASASSSQV), are a transit peptide targeting the mitochondrion.

This sequence belongs to the SDHAF2 family. Interacts with the flavoprotein subunit within the SDH catalytic dimer.

The protein resides in the mitochondrion matrix. Its function is as follows. Plays an essential role in the assembly of succinate dehydrogenase (SDH), an enzyme complex (also referred to as respiratory complex II) that is a component of both the tricarboxylic acid (TCA) cycle and the mitochondrial electron transport chain, and which couples the oxidation of succinate to fumarate with the reduction of ubiquinone (coenzyme Q) to ubiquinol. Required for flavinylation (covalent attachment of FAD) of the flavoprotein subunit of the SDH catalytic dimer. The sequence is that of Succinate dehydrogenase assembly factor 2-A, mitochondrial from Drosophila persimilis (Fruit fly).